The following is a 285-amino-acid chain: HTH-type transcriptional regulator MurR (285 aa).

One can recognise an HTH rpiR-type domain in the interval 1-77 (MLYLTKIRNA…MALIGEYSAS (77 aa)). The H-T-H motif DNA-binding region spans 37 to 56 (SRKMAKLLGISQSSIVKFAQ). The region spanning 128 to 268 (IIEAISKAPF…FVGLVQLNDV (141 aa)) is the SIS domain.

In terms of assembly, homotetramer.

It functions in the pathway amino-sugar metabolism; N-acetylmuramate degradation [regulation]. Represses the expression of the murPQ operon involved in the uptake and degradation of N-acetylmuramic acid (MurNAc). Binds to two adjacent inverted repeats within the operator region. MurNAc 6-phosphate, the substrate of MurQ, is the specific inducer that weakens binding of MurR to the operator. This Escherichia coli O17:K52:H18 (strain UMN026 / ExPEC) protein is HTH-type transcriptional regulator MurR.